Reading from the N-terminus, the 155-residue chain is Small ribosomal subunit protein uS7cz/uS7cy (155 aa).

This sequence belongs to the universal ribosomal protein uS7 family. In terms of assembly, part of the 30S ribosomal subunit.

The protein resides in the plastid. It localises to the chloroplast. One of the primary rRNA binding proteins, it binds directly to 16S rRNA where it nucleates assembly of the head domain of the 30S subunit. The protein is Small ribosomal subunit protein uS7cz/uS7cy (rps7-A) of Ceratophyllum demersum (Rigid hornwort).